The sequence spans 299 residues: ATP phosphoribosyltransferase (299 aa).

Belongs to the ATP phosphoribosyltransferase family. Long subfamily. As to quaternary structure, equilibrium between an active dimeric form, an inactive hexameric form and higher aggregates. Interconversion between the various forms is largely reversible and is influenced by the natural substrates and inhibitors of the enzyme. The cofactor is Mg(2+).

The protein localises to the cytoplasm. The catalysed reaction is 1-(5-phospho-beta-D-ribosyl)-ATP + diphosphate = 5-phospho-alpha-D-ribose 1-diphosphate + ATP. Its pathway is amino-acid biosynthesis; L-histidine biosynthesis; L-histidine from 5-phospho-alpha-D-ribose 1-diphosphate: step 1/9. Feedback inhibited by histidine. In terms of biological role, catalyzes the condensation of ATP and 5-phosphoribose 1-diphosphate to form N'-(5'-phosphoribosyl)-ATP (PR-ATP). Has a crucial role in the pathway because the rate of histidine biosynthesis seems to be controlled primarily by regulation of HisG enzymatic activity. The protein is ATP phosphoribosyltransferase of Salmonella enteritidis PT4 (strain P125109).